The sequence spans 410 residues: MKEELIDRLKRYAEIDTQSDPDSESTPSTEKQRDLLNLLKQELEELGLQTDIDDNGYLFATLESNIANEVPTVGFLAHVDTSHDFNASNVKPQIIENYDGKPIQLGDTDRELNQEVFPAMKSVEGHTLMITDGTSLLGADDKAGVAEIMTALTYLVEHPEVKHGRIRVAFTPDEEIGRGPHKFDVKRFDADFAYTMDGSQYGELQFESFNAAEATITCHGVNVHPGSAKDVMVNAIKLGERFDSMLPEDEVPEKTEGYEGFFHLMNFNGTTEKAQLKYIIRDHDRERFEARKACLLEIRDQINTVYNNDPVEVDMYDQYHNMAEKINEVPEVIEVPKRVFKKLGIEPNTEPIRGGTDGSQLSFMGLPTPNIFTGCDNFHGPFEYASIDVMERAVEVILGIAEEIAQPTDK.

The tract at residues 11–30 is disordered; sequence RYAEIDTQSDPDSESTPSTE. H78 provides a ligand contact to Zn(2+). D80 is a catalytic residue. D140 is a binding site for Zn(2+). E174 (proton acceptor) is an active-site residue. The Zn(2+) site is built by E175, D197, and H379.

Belongs to the peptidase M20B family. Requires Zn(2+) as cofactor.

It localises to the cytoplasm. The catalysed reaction is Release of the N-terminal residue from a tripeptide.. Functionally, cleaves the N-terminal amino acid of tripeptides. The chain is Peptidase T from Staphylococcus carnosus (strain TM300).